Consider the following 305-residue polypeptide: Alpha-N-acetylgalactosaminide alpha-2,6-sialyltransferase 3 (305 aa).

The Cytoplasmic portion of the chain corresponds to 1 to 8 (MACILKRK). The chain crosses the membrane as a helical; Signal-anchor for type II membrane protein span at residues 9 to 29 (PALAVSFIALCILLLAMRLAN). Residues 30–305 (DVTFPLLLNC…VFTHPNWTVS (276 aa)) lie on the Lumenal side of the membrane. An intrachain disulfide couples Cys-80 to Cys-229. N-linked (GlcNAc...) asparagine glycosylation is found at Asn-239 and Asn-301.

It belongs to the glycosyltransferase 29 family. In adults it is highly expressed in spleen, followed by kidney and lesser in lung. Not found in liver and skeletal muscle. In newborns it is abundantly expressed in brain and kidney.

It localises to the golgi apparatus membrane. The catalysed reaction is an alpha-Neu5Ac-(2-&gt;3)-beta-D-Gal-(1-&gt;3)-D-GlcNAc derivative + CMP-N-acetyl-beta-neuraminate = an alpha-Neu5Ac-(2-&gt;3)-beta-D-Gal-(1-&gt;3)-[alpha-Neu5Ac-(2-&gt;6)]-D-GlcNAc derivative + CMP + H(+). The enzyme catalyses a ganglioside GM1b + CMP-N-acetyl-beta-neuraminate = a ganglioside GD1alpha + CMP + H(+). It catalyses the reaction a ganglioside GM1b (d18:1(4E)) + CMP-N-acetyl-beta-neuraminate = a ganglioside GD1alpha (d18:1(4E)) + CMP + H(+). It carries out the reaction a globoside MSGG + CMP-N-acetyl-beta-neuraminate = a globoside DSGG + CMP + H(+). The catalysed reaction is 3-O-[alpha-Neu5Ac-(2-&gt;3)-beta-D-Gal-(1-&gt;3)-alpha-D-GalNAc]-L-Ser-[protein] + CMP-N-acetyl-beta-neuraminate = a 3-O-{alpha-Neu5Ac-(2-&gt;3)-beta-D-Gal-(1-&gt;3)-[alpha-Neu5Ac-(2-&gt;6)]-alpha-D-GalNAc}-L-seryl-[protein] + CMP + H(+). The enzyme catalyses 3-O-[alpha-Neu5Ac-(2-&gt;3)-beta-D-Gal-(1-&gt;3)-alpha-D-GalNAc]-L-Thr-[protein] + CMP-N-acetyl-beta-neuraminate = a 3-O-{alpha-Neu5Ac-(2-&gt;3)-beta-D-Gal-(1-&gt;3)-[alpha-Neu5Ac-(2-&gt;6)]-alpha-D-GalNAc}-L-threonyl-[protein] + CMP + H(+). It functions in the pathway protein modification; protein glycosylation. Its pathway is glycolipid biosynthesis. In terms of biological role, transfers the sialyl group (N-acetyl-alpha-neuraminyl or NeuAc) from CMP-NeuAc to the GalNAc residue on the NeuAc-alpha-2,3-Gal-beta-1,3-GalNAc sequence of glycoproteins and glycolipids forming an alpha-2,6-linkage. Produces branched type disialyl structures by transfer of a sialyl group onto a GalNAc residue inside the backbone core chains. ST6GalNAcIII prefers glycolipids to glycoproteins, predominantly catalyzing the biosynthesis of ganglioside GD1alpha from GM1b. GD1alpha is a critical molecule in the communication and interaction between neuronal cells and their supportive cells, particularly in brain tissues, and functions as an adhesion molecule in the process of metastasis. Sialylation of glycoproteins or glycosphingolipids is very important in tumor development, neuronal development, nerve repair, immunological processes and regulation of hormone sensitivity. The sequence is that of Alpha-N-acetylgalactosaminide alpha-2,6-sialyltransferase 3 (St6galnac3) from Rattus norvegicus (Rat).